A 572-amino-acid chain; its full sequence is Cytochrome P450 monooxygenase xilC (572 aa).

Heme is bound at residue cysteine 515.

This sequence belongs to the cytochrome P450 family. Heme is required as a cofactor.

It functions in the pathway secondary metabolite biosynthesis. Cytochrome P450 monooxygenase; part of the gene cluster that mediates the biosynthesis of the 6-methyl-2-pyrone derivative xylariolide D. XilC hydroxylates the 5-alkyl-6-methyl-2-pyrone backbone called prexylariolide D, produced by the highly reducing polyketide synthase xilA, on its side chain to form xylariolide D. This is Cytochrome P450 monooxygenase xilC from Penicillium crustosum (Blue mold fungus).